The primary structure comprises 120 residues: NAD(P)H-quinone oxidoreductase subunit 3, chloroplastic (120 aa).

Transmembrane regions (helical) follow at residues 2 to 22 (FLLY…VIPI), 64 to 84 (MFAL…PWAL), and 88 to 108 (ILGV…VLGL).

This sequence belongs to the complex I subunit 3 family. As to quaternary structure, NDH is composed of at least 16 different subunits, 5 of which are encoded in the nucleus.

Its subcellular location is the plastid. It localises to the chloroplast thylakoid membrane. The enzyme catalyses a plastoquinone + NADH + (n+1) H(+)(in) = a plastoquinol + NAD(+) + n H(+)(out). It catalyses the reaction a plastoquinone + NADPH + (n+1) H(+)(in) = a plastoquinol + NADP(+) + n H(+)(out). In terms of biological role, NDH shuttles electrons from NAD(P)H:plastoquinone, via FMN and iron-sulfur (Fe-S) centers, to quinones in the photosynthetic chain and possibly in a chloroplast respiratory chain. The immediate electron acceptor for the enzyme in this species is believed to be plastoquinone. Couples the redox reaction to proton translocation, and thus conserves the redox energy in a proton gradient. This Oenothera biennis (German evening primrose) protein is NAD(P)H-quinone oxidoreductase subunit 3, chloroplastic.